The primary structure comprises 163 residues: Nucleotide-binding protein Tery_2743 (163 aa).

This sequence belongs to the YajQ family.

Nucleotide-binding protein. In Trichodesmium erythraeum (strain IMS101), this protein is Nucleotide-binding protein Tery_2743.